Here is a 322-residue protein sequence, read N- to C-terminus: Mycothiol acetyltransferase (322 aa).

N-acetyltransferase domains follow at residues 5-150 and 160-322; these read SWLR…DPDD and VTIR…PARG. Glutamate 36 provides a ligand contact to 1D-myo-inositol 2-(L-cysteinylamino)-2-deoxy-alpha-D-glucopyranoside. Residues 79–81 and 87–92 each bind acetyl-CoA; these read LVV and RRGVGT. 1D-myo-inositol 2-(L-cysteinylamino)-2-deoxy-alpha-D-glucopyranoside is bound by residues glutamate 187, lysine 226, and glutamate 252. Residue 256–258 participates in acetyl-CoA binding; that stretch reads VGV. Tyrosine 290 contacts 1D-myo-inositol 2-(L-cysteinylamino)-2-deoxy-alpha-D-glucopyranoside. 295-300 contributes to the acetyl-CoA binding site; that stretch reads NARAVR.

Belongs to the acetyltransferase family. MshD subfamily. In terms of assembly, monomer.

The enzyme catalyses 1D-myo-inositol 2-(L-cysteinylamino)-2-deoxy-alpha-D-glucopyranoside + acetyl-CoA = mycothiol + CoA + H(+). Catalyzes the transfer of acetyl from acetyl-CoA to desacetylmycothiol (Cys-GlcN-Ins) to form mycothiol. The chain is Mycothiol acetyltransferase from Parafrankia sp. (strain EAN1pec).